The chain runs to 226 residues: Transmembrane 4 L6 family member 20 (226 aa).

Residues 1-14 (MTCCEGWTSCNGFS) are Lumenal-facing. A helical transmembrane segment spans residues 15 to 35 (LLILILLGVVINCIPLGISLV). Over 36 to 49 (EADSTSQNPISCYE) the chain is Cytoplasmic. The chain crosses the membrane as a helical span at residues 50–70 (WWFPGIIGAGLMAIPATTMSL). At 71-83 (AARKRACCNNKTG) the chain is on the lumenal side. The helical transmembrane segment at 84–104 (MFLSSLFSVITVVGAVYCMLV) threads the bilayer. Topologically, residues 105 to 191 (SLQALLEGPL…RIFHFSVFMS (87 aa)) are cytoplasmic. Residues 192 to 212 (LLLVGILELLFGLSQILIGFL) traverse the membrane as a helical segment. At 213–226 (GCLCGVSQRRSQIV) the chain is on the lumenal side.

This sequence belongs to the L6 tetraspanin family. In terms of processing, glycosylated at Asn-132, Asn-148 and Asn-163 in presence of ceramide which inverts the orientation of TM4SF20 in membranes exposing these residues to the endoplasmic reticulum lumen. Cleaved by signal peptidase at Ser-14 but the peptide does not act as a signal peptide. Cleavage is inhibited by ceramide which inverts the orientation of TM4SF20 in membranes exposing the N-terminus to the cytosol and not to the endoplasmic reticulum lumen.

The protein localises to the membrane. The protein resides in the endoplasmic reticulum membrane. Polytopic transmembrane protein. Inhibits regulated intramembrane proteolysis (RIP) of CREB3L1, inhibiting its activation and the induction of collagen synthesis. In response to ceramide, which alters TM4SF20 membrane topology, stimulates RIP activation of CREB3L1. Ceramide reverses the direction through which transmembrane helices are translocated into the endoplasmic reticulum membrane during translation of TM4SF20, this mechanism is called 'regulated alternative translocation' (RAT) and regulates the function of the transmembrane protein. This Mus musculus (Mouse) protein is Transmembrane 4 L6 family member 20 (Tm4sf20).